Consider the following 337-residue polypeptide: Methylthioribose-1-phosphate isomerase (337 aa).

Residues Arg47–Ala49, Arg81, and Gln184 contribute to the substrate site. Asp225 functions as the Proton donor in the catalytic mechanism. A substrate-binding site is contributed by Asn235–Lys236.

It belongs to the eIF-2B alpha/beta/delta subunits family. MtnA subfamily.

The enzyme catalyses 5-(methylsulfanyl)-alpha-D-ribose 1-phosphate = 5-(methylsulfanyl)-D-ribulose 1-phosphate. Its pathway is amino-acid biosynthesis; L-methionine biosynthesis via salvage pathway; L-methionine from S-methyl-5-thio-alpha-D-ribose 1-phosphate: step 1/6. In terms of biological role, catalyzes the interconversion of methylthioribose-1-phosphate (MTR-1-P) into methylthioribulose-1-phosphate (MTRu-1-P). The polypeptide is Methylthioribose-1-phosphate isomerase (Synechococcus sp. (strain CC9605)).